The primary structure comprises 330 residues: Protoheme IX farnesyltransferase (330 aa).

The next 9 membrane-spanning stretches (helical) occupy residues 30–50 (LVKPKIIALLLMTTAGAMWMA), 58–78 (FFITLLGGGIAAAAANVINMV), 106–126 (LIFSGILALAAFGLLAIFTNL), 127–147 (LAAGLAMSGILVYVGVYTHWL), 155–175 (IVIGGAAGAIPPLVGWAATTG), 182–202 (WVMFAIIFLWTPPHFWALAIL), 228–248 (ILLYALLMVPVSLLLVYPLGM), 249–269 (LGSFYLSAAALLGSLLVWKAV), and 281–301 (AASLFTFANLYLLLLCGAMGL).

Belongs to the UbiA prenyltransferase family. Protoheme IX farnesyltransferase subfamily.

Its subcellular location is the cell inner membrane. The enzyme catalyses heme b + (2E,6E)-farnesyl diphosphate + H2O = Fe(II)-heme o + diphosphate. The protein operates within porphyrin-containing compound metabolism; heme O biosynthesis; heme O from protoheme: step 1/1. In terms of biological role, converts heme B (protoheme IX) to heme O by substitution of the vinyl group on carbon 2 of heme B porphyrin ring with a hydroxyethyl farnesyl side group. The polypeptide is Protoheme IX farnesyltransferase (Synechococcus sp. (strain JA-2-3B'a(2-13)) (Cyanobacteria bacterium Yellowstone B-Prime)).